Consider the following 137-residue polypeptide: Cellular retinoic acid-binding protein 1 (137 aa).

Residues 21-31 (KALGVNAMLRK) carry the Nuclear localization signal motif. Position 132–134 (132–134 (RIY)) interacts with all-trans-retinoate.

The protein belongs to the calycin superfamily. Fatty-acid binding protein (FABP) family.

The protein resides in the cytoplasm. Cytosolic CRABPs may regulate the access of retinoic acid to the nuclear retinoic acid receptors. The chain is Cellular retinoic acid-binding protein 1 (CRABP1) from Gallus gallus (Chicken).